The following is a 135-amino-acid chain: AVCVSLLGAANIPPQSLNLYQFKNMIECAGTRTWLAYVKYGCYCGPGGTGTPLDELDRCCQTHDHCYDNAKKFGNCIPYLKTYVYTCNKPDITCTGAKGSCGRNVCDCDRAAAICFAAAPYNLANFGIDKEKHCQ.

Disulfide bonds link C28-C87, C42-C134, C44-C60, C59-C115, C66-C108, C76-C101, and C94-C106. Ca(2+)-binding residues include Y43, G45, and G47. H63 is an active-site residue. D64 provides a ligand contact to Ca(2+). Residue D109 is part of the active site.

Belongs to the phospholipase A2 family. Group I subfamily. D49 sub-subfamily. Ca(2+) serves as cofactor. Expressed by the venom gland.

It is found in the secreted. It carries out the reaction a 1,2-diacyl-sn-glycero-3-phosphocholine + H2O = a 1-acyl-sn-glycero-3-phosphocholine + a fatty acid + H(+). Snake venom phospholipase A2 (PLA2) that inhibits neuromuscular transmission by blocking acetylcholine release from the nerve termini. PLA2 catalyzes the calcium-dependent hydrolysis of the 2-acyl groups in 3-sn-phosphoglycerides. Very weakly suppress the acetylcholine (ACh)-evoked current mediated by alpha-7-similar nAChRs in L.stagnalis neurons. The protein is Basic phospholipase A2 6 of Bungarus fasciatus (Banded krait).